The primary structure comprises 361 residues: Beta-hexosaminidase (361 aa).

Substrate is bound by residues aspartate 69, arginine 77, arginine 144, and 174–175 (KH). The Proton donor/acceptor role is filled by histidine 187. The active-site Nucleophile is aspartate 258.

It belongs to the glycosyl hydrolase 3 family. NagZ subfamily.

The protein resides in the cytoplasm. The catalysed reaction is Hydrolysis of terminal non-reducing N-acetyl-D-hexosamine residues in N-acetyl-beta-D-hexosaminides.. Its pathway is cell wall biogenesis; peptidoglycan recycling. Its function is as follows. Plays a role in peptidoglycan recycling by cleaving the terminal beta-1,4-linked N-acetylglucosamine (GlcNAc) from peptide-linked peptidoglycan fragments, giving rise to free GlcNAc, anhydro-N-acetylmuramic acid and anhydro-N-acetylmuramic acid-linked peptides. The protein is Beta-hexosaminidase of Neisseria gonorrhoeae (strain ATCC 700825 / FA 1090).